Here is a 593-residue protein sequence, read N- to C-terminus: Uroporphyrinogen-III C-methyltransferase (593 aa).

The interval 278–303 is disordered; that stretch reads ETSSSPNKKTKQETVTEGVVPPTDEN.

The protein belongs to the precorrin methyltransferase family.

It catalyses the reaction uroporphyrinogen III + 2 S-adenosyl-L-methionine = precorrin-2 + 2 S-adenosyl-L-homocysteine + H(+). Its function is as follows. Siroheme synthase involved in methionine biosynthesis. This chain is Uroporphyrinogen-III C-methyltransferase, found in Saccharomyces cerevisiae (strain ATCC 204508 / S288c) (Baker's yeast).